We begin with the raw amino-acid sequence, 264 residues long: MKFLVVFAVVRACVTPACAEMSAVSMSSSNKELEEKLYNSILTGDYDSAVRQSLEYESQGKGSIIQNVVNNLIIDKRRNTMEYCYKLWVGNGQEIVRKYFPLNFRLIMAGNYVKIIYRNYNLALKLGSTTNPSNERIAYGDGVDKHTELVSWKFITLWENNRVYFKIHNTKYNQYLKMSTTTCNCNSRDRVVYGGNSADSTREQWFFQPAKYENDVLFFIYNRQFNDALELGTIVNASGDRKAVGHDGEVAGLPDIYSWFITPF.

Positions 1–23 (MKFLVVFAVVRACVTPACAEMSA) are cleaved as a signal peptide.

The protein belongs to the 30 kDa lipoprotein family.

It localises to the secreted. The sequence is that of Low molecular mass lipoprotein PBMHPC-23 from Bombyx mori (Silk moth).